The sequence spans 366 residues: IgG receptor FcRn large subunit p51 (366 aa).

Residues 1–22 (MGMSQPGVLLSLLLVLLPQTWG) form the signal peptide. Residues 23–111 (AEPRLPLMYH…RTLENQINGT (89 aa)) are alpha-1. The Extracellular portion of the chain corresponds to 23-298 (AEPRLPLMYH…VDLDSPARSS (276 aa)). 4 N-linked (GlcNAc...) asparagine glycosylation sites follow: Asn-109, Asn-126, Asn-150, and Asn-247. The alpha-2 stretch occupies residues 112–201 (FTLQGLLGCE…ERGRQNLEWK (90 aa)). Disulfide bonds link Cys-120–Cys-183 and Cys-222–Cys-276. The tract at residues 202–291 (EPPSMRLKAR…GLAQPLTVDL (90 aa)) is alpha-3. Residues 203–290 (PPSMRLKARP…EGLAQPLTVD (88 aa)) form the Ig-like C1-type domain. Residues 293 to 298 (SPARSS) are connecting peptide. A helical transmembrane segment spans residues 299–322 (VPVVGIILGLLLVVVAIAGGVLLW). Residues 323–366 (NRMRSGLPAPWLSLSGDDSGDLLPGGNLPPEAEPQGVNAFPATS) are Cytoplasmic-facing. At Ser-335 the chain carries Phosphoserine. Residues 344–366 (LLPGGNLPPEAEPQGVNAFPATS) are disordered.

It belongs to the immunoglobulin superfamily. As to quaternary structure, fcRn complex consists of two subunits: p51, and p14 which is equivalent to beta-2-microglobulin. It forms an MHC class I-like heterodimer. Interacts with albumin/ALB; this interaction regulates ALB homeostasis. As to expression, intestinal epithelium.

The protein localises to the cell membrane. It localises to the endosome membrane. In terms of biological role, cell surface receptor that transfers passive humoral immunity from the mother to the newborn. Binds to the Fc region of monomeric immunoglobulin gamma and mediates its selective uptake from milk. IgG in the milk is bound at the apical surface of the intestinal epithelium. The resultant FcRn-IgG complexes are transcytosed across the intestinal epithelium and IgG is released from FcRn into blood or tissue fluids. Throughout life, contributes to effective humoral immunity by recycling IgG and extending its half-life in the circulation. Mechanistically, monomeric IgG binding to FcRn in acidic endosomes of endothelial and hematopoietic cells recycles IgG to the cell surface where it is released into the circulation. In addition of IgG, regulates homeostasis of the other most abundant circulating protein albumin/ALB. This is IgG receptor FcRn large subunit p51 (Fcgrt) from Rattus norvegicus (Rat).